The sequence spans 172 residues: Major exported protein (172 aa).

It belongs to the hcp1 family.

It is found in the secreted. The chain is Major exported protein (hcpA) from Pseudomonas aeruginosa (strain ATCC 15692 / DSM 22644 / CIP 104116 / JCM 14847 / LMG 12228 / 1C / PRS 101 / PAO1).